A 214-amino-acid polypeptide reads, in one-letter code: Cytochrome b (214 aa).

Transmembrane regions (helical) follow at residues 31 to 51, 75 to 96, 111 to 131, and 176 to 196; these read FGSM…FLAI, WIMQ…YIHI, WLSG…GYVL, and FFAL…IHIL. Residues His81 and His95 each coordinate heme b. Heme b contacts are provided by His180 and His194. A ubiquinone is bound at residue His199.

The protein belongs to the cytochrome b family. The cytochrome bc1 complex contains 3 respiratory subunits (MT-CYB, CYC1 and UQCRFS1), 2 core proteins (UQCRC1 and UQCRC2) and probably 6 low-molecular weight proteins. Requires heme b as cofactor.

The protein resides in the mitochondrion inner membrane. In terms of biological role, component of the ubiquinol-cytochrome c reductase complex (complex III or cytochrome b-c1 complex) that is part of the mitochondrial respiratory chain. The b-c1 complex mediates electron transfer from ubiquinol to cytochrome c. Contributes to the generation of a proton gradient across the mitochondrial membrane that is then used for ATP synthesis. The polypeptide is Cytochrome b (MT-CYB) (Bothrops bilineatus (Green jararaca)).